We begin with the raw amino-acid sequence, 463 residues long: L-seryl-tRNA(Sec) selenium transferase (463 aa).

At Lys295 the chain carries N6-(pyridoxal phosphate)lysine.

Belongs to the SelA family. In terms of assembly, homodecamer; pentamer of dimers. Binds only one seryl-tRNA(Sec) per dimer. Requires pyridoxal 5'-phosphate as cofactor.

The protein resides in the cytoplasm. The catalysed reaction is L-seryl-tRNA(Sec) + selenophosphate + H(+) = L-selenocysteinyl-tRNA(Sec) + phosphate. It participates in aminoacyl-tRNA biosynthesis; selenocysteinyl-tRNA(Sec) biosynthesis; selenocysteinyl-tRNA(Sec) from L-seryl-tRNA(Sec) (bacterial route): step 1/1. Functionally, converts seryl-tRNA(Sec) to selenocysteinyl-tRNA(Sec) required for selenoprotein biosynthesis. The protein is L-seryl-tRNA(Sec) selenium transferase of Salmonella dublin (strain CT_02021853).